We begin with the raw amino-acid sequence, 273 residues long: ComE operon protein 4 (273 aa).

Belongs to the pyrroline-5-carboxylate reductase family.

In terms of biological role, dispensable for transformability. Not known if it can act as a pyrroline-5-carboxylate reductase. The chain is ComE operon protein 4 (comER) from Bacillus subtilis (strain 168).